Consider the following 219-residue polypeptide: MSPQDKLVIALPKGRILDEAMPLVRAAGILPEPAFDDPKSRLLRFGTNHPHIDIIRVRSFDVATFVAFGAAHLGVAGNDVLMEFDYPEIYAPLDLGIGACRLSVAEPDDLAASDDPRRWSHVRIATKYPEVTKRHFAARGVQAECVKLNGAMELAPSLGLCTRIVDLVSSGATLKANGLKEVEVLAEVTSRLIVNRAALKTRPDEMAGWIEAFRKACGG.

The protein belongs to the ATP phosphoribosyltransferase family. Short subfamily. Heteromultimer composed of HisG and HisZ subunits.

It localises to the cytoplasm. It carries out the reaction 1-(5-phospho-beta-D-ribosyl)-ATP + diphosphate = 5-phospho-alpha-D-ribose 1-diphosphate + ATP. It participates in amino-acid biosynthesis; L-histidine biosynthesis; L-histidine from 5-phospho-alpha-D-ribose 1-diphosphate: step 1/9. Its function is as follows. Catalyzes the condensation of ATP and 5-phosphoribose 1-diphosphate to form N'-(5'-phosphoribosyl)-ATP (PR-ATP). Has a crucial role in the pathway because the rate of histidine biosynthesis seems to be controlled primarily by regulation of HisG enzymatic activity. This chain is ATP phosphoribosyltransferase, found in Paramagnetospirillum magneticum (strain ATCC 700264 / AMB-1) (Magnetospirillum magneticum).